The sequence spans 566 residues: Arginine--tRNA ligase (566 aa).

Positions 124–134 (ANPNGPLHIGH) match the 'HIGH' region motif.

Belongs to the class-I aminoacyl-tRNA synthetase family.

It localises to the cytoplasm. It carries out the reaction tRNA(Arg) + L-arginine + ATP = L-arginyl-tRNA(Arg) + AMP + diphosphate. This chain is Arginine--tRNA ligase (argS), found in Methanocaldococcus jannaschii (strain ATCC 43067 / DSM 2661 / JAL-1 / JCM 10045 / NBRC 100440) (Methanococcus jannaschii).